The chain runs to 205 residues: Purine catabolism protein PucB (205 aa).

It functions in the pathway purine metabolism; hypoxanthine degradation. Required for xanthine dehydrogenase activity. Could be involved in formation of the molybdenum cofactor required by xanthine dehydrogenase. The sequence is that of Purine catabolism protein PucB (pucB) from Bacillus subtilis (strain 168).